The following is a 20-amino-acid chain: Bulb protein (20 aa).

The segment at 1–20 is disordered; the sequence is APDVHTRXTQNGLPPGXLPS.

The sequence is that of Bulb protein from Narcissus pseudonarcissus (Daffodil).